The primary structure comprises 188 residues: UPF0314 protein Sala_3154 (188 aa).

Transmembrane regions (helical) follow at residues 8 to 28 (TGWL…IFMG), 57 to 77 (WYSF…RWIM), and 143 to 163 (MRWW…LWTI).

This sequence belongs to the UPF0314 family.

It localises to the cell membrane. The polypeptide is UPF0314 protein Sala_3154 (Sphingopyxis alaskensis (strain DSM 13593 / LMG 18877 / RB2256) (Sphingomonas alaskensis)).